The sequence spans 214 residues: Dynein axonemal assembly factor 6 (214 aa).

Disordered regions lie at residues 1–22 and 34–68; these read MESENMDSENMKTENMESQNVD and ALSKLLNPEEEDDSDYGQTNGLSTIGAMGPGNIGP.

The protein belongs to the PIH1 family. In terms of assembly, interacts with HSPA1A/B and HSP90AA1. Interacts with DNAAF2 and DNAAF4. Interacts wuth DNAI2. In terms of tissue distribution, expressed in testis, small intestine, prostate, adrenal gland, spleen, lung, bladder, breast and ovary. Expressed in ciliated epithelial cells.

The protein localises to the cytoplasm. It is found in the golgi apparatus. It localises to the trans-Golgi network. Its function is as follows. Plays a role in cytoplasmic pre-assembly of axonemal dynein. The sequence is that of Dynein axonemal assembly factor 6 from Homo sapiens (Human).